The primary structure comprises 99 residues: uncharacterized protein (99 aa).

In terms of domain architecture, TM2 spans 32 to 79 (KKSVGIAVLLSFIIPGAGQMYLGRVGKGIILLLTCWLIIPWIYSIYDA). 2 consecutive transmembrane segments (helical) span residues 34–54 (SVGI…MYLG) and 56–76 (VGKG…IYSI).

The protein resides in the cell membrane. This is an uncharacterized protein from Methanocaldococcus jannaschii (strain ATCC 43067 / DSM 2661 / JAL-1 / JCM 10045 / NBRC 100440) (Methanococcus jannaschii).